A 72-amino-acid chain; its full sequence is ATP synthase subunit c (72 aa).

2 consecutive transmembrane segments (helical) span residues Met-1 to Ile-21 and Met-48 to Ile-68.

Belongs to the ATPase C chain family. F-type ATPases have 2 components, F(1) - the catalytic core - and F(0) - the membrane proton channel. F(1) has five subunits: alpha(3), beta(3), gamma(1), delta(1), epsilon(1). F(0) has three main subunits: a(1), b(2) and c(10-14). The alpha and beta chains form an alternating ring which encloses part of the gamma chain. F(1) is attached to F(0) by a central stalk formed by the gamma and epsilon chains, while a peripheral stalk is formed by the delta and b chains.

The protein resides in the cell membrane. Its function is as follows. F(1)F(0) ATP synthase produces ATP from ADP in the presence of a proton or sodium gradient. F-type ATPases consist of two structural domains, F(1) containing the extramembraneous catalytic core and F(0) containing the membrane proton channel, linked together by a central stalk and a peripheral stalk. During catalysis, ATP synthesis in the catalytic domain of F(1) is coupled via a rotary mechanism of the central stalk subunits to proton translocation. Key component of the F(0) channel; it plays a direct role in translocation across the membrane. A homomeric c-ring of between 10-14 subunits forms the central stalk rotor element with the F(1) delta and epsilon subunits. The chain is ATP synthase subunit c from Geobacillus stearothermophilus (Bacillus stearothermophilus).